Reading from the N-terminus, the 346-residue chain is DNA ligase (346 aa).

ATP-binding positions include 32–35 (DCKY), R39, 55–57 (RVS), E93, E142, and R149. K34 functions as the N6-AMP-lysine intermediate in the catalytic mechanism. Residue E223 participates in a divalent metal cation binding. 2 residues coordinate ATP: K238 and K244.

It belongs to the ATP-dependent DNA ligase family. It depends on a divalent metal cation as a cofactor.

It carries out the reaction ATP + (deoxyribonucleotide)n-3'-hydroxyl + 5'-phospho-(deoxyribonucleotide)m = (deoxyribonucleotide)n+m + AMP + diphosphate.. In terms of biological role, DNA ligase, which is expressed in the early stage of lytic development, has been implicated in T7 DNA synthesis and genetic recombination. It may also play a role in T7 DNA repair. This Enterobacteria phage T3 (Bacteriophage T3) protein is DNA ligase (1.3).